Here is a 536-residue protein sequence, read N- to C-terminus: Light-independent protochlorophyllide reductase subunit B (536 aa).

Residue Asp-36 coordinates [4Fe-4S] cluster. Residue Asp-292 is the Proton donor of the active site. Substrate is bound at residue 427-428; sequence GL. Residues 447–489 are disordered; sequence QSHLGHLGGHQSQTEQQQSQAATNPSTQSNTDSSSEESPLWTP. Residues 448–469 show a composition bias toward low complexity; sequence SHLGHLGGHQSQTEQQQSQAAT. Residues 470–483 show a composition bias toward polar residues; sequence NPSTQSNTDSSSEE.

This sequence belongs to the ChlB/BchB/BchZ family. As to quaternary structure, protochlorophyllide reductase is composed of three subunits; ChlL, ChlN and ChlB. Forms a heterotetramer of two ChlB and two ChlN subunits. [4Fe-4S] cluster is required as a cofactor.

It carries out the reaction chlorophyllide a + oxidized 2[4Fe-4S]-[ferredoxin] + 2 ADP + 2 phosphate = protochlorophyllide a + reduced 2[4Fe-4S]-[ferredoxin] + 2 ATP + 2 H2O. It functions in the pathway porphyrin-containing compound metabolism; chlorophyll biosynthesis (light-independent). In terms of biological role, component of the dark-operative protochlorophyllide reductase (DPOR) that uses Mg-ATP and reduced ferredoxin to reduce ring D of protochlorophyllide (Pchlide) to form chlorophyllide a (Chlide). This reaction is light-independent. The NB-protein (ChlN-ChlB) is the catalytic component of the complex. The protein is Light-independent protochlorophyllide reductase subunit B of Prochlorococcus marinus (strain MIT 9303).